We begin with the raw amino-acid sequence, 87 residues long: U3-theraphotoxin-Cg1b (87 aa).

An N-terminal signal peptide occupies residues 1–23 (MRTFTLIAILTCAVLVIFHVSAA). Positions 24–48 (EELEAQDVIQPEDIFTGVATLEEDR) are excised as a propeptide. Disulfide bonds link C52–C65, C56–C79, and C73–C84.

Belongs to the neurotoxin 12 (Hwtx-2) family. 03 (juruin) subfamily. In terms of tissue distribution, expressed by the venom gland.

The protein localises to the secreted. Its function is as follows. Probable ion channel inhibitor. This chain is U3-theraphotoxin-Cg1b, found in Chilobrachys guangxiensis (Chinese earth tiger tarantula).